The chain runs to 170 residues: MSRAKAAPVAGPEVAANRAGRQARIVAILSSAQVRSQNELAALLAAEGIEVTQATLSRDLEELGAVKLRGADGGTGIYVVPEDGSPVRGVSGGTDRMARLLGELLVSTDDSGNLAVLRTPPGAAHYLASAIDRAALPQVVGTIAGDDTILVVAREPTTGAQLAGMFENLR.

This sequence belongs to the ArgR family.

It is found in the cytoplasm. The protein operates within amino-acid biosynthesis; L-arginine biosynthesis [regulation]. Its function is as follows. Regulates arginine biosynthesis genes. The polypeptide is Arginine repressor (Mycobacterium tuberculosis (strain ATCC 25177 / H37Ra)).